Here is a 372-residue protein sequence, read N- to C-terminus: Glutamate 5-kinase (372 aa).

Residue Lys-14 coordinates ATP. Residues Ser-54, Asp-141, and Asn-153 each coordinate substrate. Residues 173–174 (TD) and 215–221 (TGGMLTK) each bind ATP. A PUA domain is found at 280-358 (AGRLVLDDGA…RDIERLLGYV (79 aa)).

This sequence belongs to the glutamate 5-kinase family.

Its subcellular location is the cytoplasm. The enzyme catalyses L-glutamate + ATP = L-glutamyl 5-phosphate + ADP. It functions in the pathway amino-acid biosynthesis; L-proline biosynthesis; L-glutamate 5-semialdehyde from L-glutamate: step 1/2. In terms of biological role, catalyzes the transfer of a phosphate group to glutamate to form L-glutamate 5-phosphate. The chain is Glutamate 5-kinase from Laribacter hongkongensis (strain HLHK9).